The following is a 109-amino-acid chain: MIKLKVKKGDEVIVITGKYKGKKGKILKVFPEQNKIVVSGINLVKKHTKPTKVSEGGIITKELPIDISNVAHVDPKTGNPTKVAFKFLEDGSKVRIAKKSGEIIGKEGK.

It belongs to the universal ribosomal protein uL24 family. Part of the 50S ribosomal subunit.

Its function is as follows. One of two assembly initiator proteins, it binds directly to the 5'-end of the 23S rRNA, where it nucleates assembly of the 50S subunit. In terms of biological role, one of the proteins that surrounds the polypeptide exit tunnel on the outside of the subunit. The polypeptide is Large ribosomal subunit protein uL24 (Rickettsia bellii (strain RML369-C)).